The primary structure comprises 324 residues: Probable UDP-sugar transporter protein SLC35A4 (324 aa).

Residues Met1–Arg18 lie on the Cytoplasmic side of the membrane. The helical transmembrane segment at Trp19 to Leu39 threads the bilayer. Over Cys40–Ser52 the chain is Lumenal. The helical transmembrane segment at Ala53 to Trp73 threads the bilayer. At Gln74 to Gln85 the chain is on the cytoplasmic side. A helical membrane pass occupies residues Ala86–Leu106. Residues Gln107–Gln142 are Lumenal-facing. Residues Gly143–Glu163 traverse the membrane as a helical segment. Over Pro164–Met180 the chain is Cytoplasmic. Residues Pro181–Leu201 form a helical membrane-spanning segment. Residues Ser202–Arg214 are Lumenal-facing. The helical transmembrane segment at Leu215–Leu235 threads the bilayer. Residues Tyr236–Gly248 are Cytoplasmic-facing. A helical transmembrane segment spans residues Phe249–Met271. The Lumenal segment spans residues Lys272–Arg279. A helical membrane pass occupies residues Leu280–Leu300. Over Gln301–Pro324 the chain is Cytoplasmic.

The protein belongs to the nucleotide-sugar transporter family. SLC35A subfamily. In terms of assembly, found in a complex with SLC35A2 and SLC35A3.

Its subcellular location is the golgi apparatus membrane. The enzyme catalyses CDP-L-ribitol(in) + CDP(out) = CDP-L-ribitol(out) + CDP(in). Functionally, mediates the transport of CDP-ribitol. Does not exhibit CMP-sialic acid, UDP-galactose and UDP-N-acetylglucosamine transport activity. This Mus musculus (Mouse) protein is Probable UDP-sugar transporter protein SLC35A4.